Reading from the N-terminus, the 245-residue chain is Acetylglutamate kinase (245 aa).

Substrate is bound by residues 41 to 42 (GG), arginine 63, and asparagine 156.

The protein belongs to the acetylglutamate kinase family. ArgB subfamily.

It is found in the cytoplasm. It catalyses the reaction N-acetyl-L-glutamate + ATP = N-acetyl-L-glutamyl 5-phosphate + ADP. The protein operates within amino-acid biosynthesis; L-arginine biosynthesis; N(2)-acetyl-L-ornithine from L-glutamate: step 2/4. In terms of biological role, catalyzes the ATP-dependent phosphorylation of N-acetyl-L-glutamate. This is Acetylglutamate kinase from Streptococcus sanguinis (strain SK36).